Consider the following 252-residue polypeptide: Putative peptide zinc metalloprotease protein YydH (252 aa).

2 helical membrane-spanning segments follow: residues 56-76 and 85-105; these read FFYL…IHLI and VFYG…NIVL. H106 is a binding site for Zn(2+). The active site involves E107. H110 is a Zn(2+) binding site. A run of 3 helical transmembrane segments spans residues 152–172, 181–201, and 231–251; these read IIVH…LELI, ALTM…IPIL, and IQII…LYIV.

It belongs to the peptidase M50B family. Zn(2+) serves as cofactor.

It localises to the cell membrane. Required for production of the modified peptide YydF. May process the precursor form of YydF to release the active peptide (Potential). The sequence is that of Putative peptide zinc metalloprotease protein YydH (yydH) from Bacillus subtilis (strain 168).